We begin with the raw amino-acid sequence, 660 residues long: Squalene--hopene cyclase (660 aa).

One copy of the PFTB 1 repeat lies at 73 to 114 (EAKIGNYLRRVQGAHGGWPLVHDGEFDMSASVKAYFALKMIG). Asp394 serves as the catalytic Proton donor. PFTB repeat units lie at residues 419–460 (IDRG…GALL) and 536–586 (IRKA…ALMA).

The protein belongs to the terpene cyclase/mutase family.

Its subcellular location is the cell membrane. It catalyses the reaction squalene = hop-22(29)-ene. It carries out the reaction squalene + H2O = hopan-22-ol. It participates in secondary metabolite biosynthesis; hopanoid biosynthesis. Functionally, catalyzes the cyclization of squalene into hopene. This Bradyrhizobium diazoefficiens (strain JCM 10833 / BCRC 13528 / IAM 13628 / NBRC 14792 / USDA 110) protein is Squalene--hopene cyclase (shc).